The sequence spans 133 residues: Glutaredoxin-C4, chloroplastic (133 aa).

Low complexity predominate over residues 1 to 13 (MGMAQSSSSSSRP). Residues 1–25 (MGMAQSSSSSSRPSDSEQLEEPSKP) are disordered. The N-terminal 27 residues, 1 to 27 (MGMAQSSSSSSRPSDSEQLEEPSKPVM), are a transit peptide targeting the chloroplast. A Glutaredoxin domain is found at 29–129 (LDKAKEIVAS…PLLTEAGAIA (101 aa)). A disulfide bond links C49 and C52.

This sequence belongs to the glutaredoxin family. CPYC subfamily.

Its subcellular location is the plastid. It is found in the chloroplast. Functionally, has a glutathione-disulfide oxidoreductase activity in the presence of NADPH and glutathione reductase. Reduces low molecular weight disulfides and proteins. In Oryza sativa subsp. japonica (Rice), this protein is Glutaredoxin-C4, chloroplastic (GRXC4).